The primary structure comprises 179 residues: Large ribosomal subunit protein uL6 (179 aa).

The protein belongs to the universal ribosomal protein uL6 family. In terms of assembly, part of the 50S ribosomal subunit.

This protein binds to the 23S rRNA, and is important in its secondary structure. It is located near the subunit interface in the base of the L7/L12 stalk, and near the tRNA binding site of the peptidyltransferase center. The sequence is that of Large ribosomal subunit protein uL6 from Metamycoplasma arthritidis (strain 158L3-1) (Mycoplasma arthritidis).